The chain runs to 278 residues: Large ribosomal subunit protein uL2 (278 aa).

Residues 210 to 219 are compositionally biased toward basic residues; sequence RKRWLGKRPQ. The disordered stretch occupies residues 210–278; it reads RKRWLGKRPQ…LIIRHRKGSK (69 aa). Residues 258 to 270 show a composition bias toward basic and acidic residues; that stretch reads KTRDVKKASEKLI.

The protein belongs to the universal ribosomal protein uL2 family. Part of the 50S ribosomal subunit. Forms a bridge to the 30S subunit in the 70S ribosome.

One of the primary rRNA binding proteins. Required for association of the 30S and 50S subunits to form the 70S ribosome, for tRNA binding and peptide bond formation. It has been suggested to have peptidyltransferase activity; this is somewhat controversial. Makes several contacts with the 16S rRNA in the 70S ribosome. This is Large ribosomal subunit protein uL2 from Lactobacillus acidophilus (strain ATCC 700396 / NCK56 / N2 / NCFM).